Consider the following 188-residue polypeptide: Transmembrane protein 160 (188 aa).

The N-terminal 96 residues, 1-96 (MGGGWWWARV…ISFMQSDMGR (96 aa)), are a transit peptide targeting the mitochondrion. The interval 21-53 (SLQPPQRPRSGGARGSFAPGHGPRAGASPPPVS) is disordered. A Phosphoserine modification is found at Ser48. 2 helical membrane-spanning segments follow: residues 102–122 (FFLL…VGLA) and 135–155 (AAAG…AVGL). The disordered stretch occupies residues 168–188 (PEDDGAASTEGPDEAGRPPPE).

It belongs to the TMEM160 family. As to expression, expressed in peripheral sensory neurons of dorsal root ganglia (DRG).

It localises to the mitochondrion inner membrane. The sequence is that of Transmembrane protein 160 from Mus musculus (Mouse).